The chain runs to 97 residues: CLAVATA3/ESR (CLE)-related protein ESR2-C (97 aa).

The interval 1 to 97 (TRTDDKPGVN…IGPPPFLDRY (97 aa)) is disordered. Residues Pro47 and Pro50 each carry the hydroxyproline modification. Pro50 carries an O-linked (Ara...) hydroxyproline glycan.

This sequence belongs to the CLV3/ESR signal peptide family. The O-glycosylation (arabinosylation) of the hydroxyproline Pro-50 enhances binding affinity of the ESR2Cp peptide for its receptor. As to expression, seed endosperm.

It is found in the secreted. The protein resides in the extracellular space. Extracellular signal peptide that regulates cell fate. This Zea mays (Maize) protein is CLAVATA3/ESR (CLE)-related protein ESR2-C.